A 272-amino-acid polypeptide reads, in one-letter code: Imidazole glycerol phosphate synthase subunit HisF (272 aa).

Catalysis depends on residues D11 and D130.

The protein belongs to the HisA/HisF family. As to quaternary structure, heterodimer of HisH and HisF.

The protein localises to the cytoplasm. The catalysed reaction is 5-[(5-phospho-1-deoxy-D-ribulos-1-ylimino)methylamino]-1-(5-phospho-beta-D-ribosyl)imidazole-4-carboxamide + L-glutamine = D-erythro-1-(imidazol-4-yl)glycerol 3-phosphate + 5-amino-1-(5-phospho-beta-D-ribosyl)imidazole-4-carboxamide + L-glutamate + H(+). Its pathway is amino-acid biosynthesis; L-histidine biosynthesis; L-histidine from 5-phospho-alpha-D-ribose 1-diphosphate: step 5/9. In terms of biological role, IGPS catalyzes the conversion of PRFAR and glutamine to IGP, AICAR and glutamate. The HisF subunit catalyzes the cyclization activity that produces IGP and AICAR from PRFAR using the ammonia provided by the HisH subunit. In Methanococcus vannielii (strain ATCC 35089 / DSM 1224 / JCM 13029 / OCM 148 / SB), this protein is Imidazole glycerol phosphate synthase subunit HisF.